A 465-amino-acid polypeptide reads, in one-letter code: ATP synthase subunit beta (465 aa).

Position 149-156 (149-156 (GGAGVGKT)) interacts with ATP.

It belongs to the ATPase alpha/beta chains family. In terms of assembly, F-type ATPases have 2 components, CF(1) - the catalytic core - and CF(0) - the membrane proton channel. CF(1) has five subunits: alpha(3), beta(3), gamma(1), delta(1), epsilon(1). CF(0) has three main subunits: a(1), b(2) and c(9-12). The alpha and beta chains form an alternating ring which encloses part of the gamma chain. CF(1) is attached to CF(0) by a central stalk formed by the gamma and epsilon chains, while a peripheral stalk is formed by the delta and b chains.

It localises to the cell inner membrane. It catalyses the reaction ATP + H2O + 4 H(+)(in) = ADP + phosphate + 5 H(+)(out). Its function is as follows. Produces ATP from ADP in the presence of a proton gradient across the membrane. The catalytic sites are hosted primarily by the beta subunits. The sequence is that of ATP synthase subunit beta from Dictyoglomus turgidum (strain DSM 6724 / Z-1310).